Here is an 88-residue protein sequence, read N- to C-terminus: Small ribosomal subunit protein bS20 (88 aa).

Disordered stretches follow at residues 1 to 22 (MPNI…AQNA) and 69 to 88 (KNAA…GLSA).

This sequence belongs to the bacterial ribosomal protein bS20 family.

In terms of biological role, binds directly to 16S ribosomal RNA. This Shouchella clausii (strain KSM-K16) (Alkalihalobacillus clausii) protein is Small ribosomal subunit protein bS20.